The chain runs to 122 residues: uncharacterized protein (122 aa).

The next 3 helical transmembrane spans lie at 21–40 (VWSW…SIAI), 57–77 (YTHM…CICI), and 94–114 (LLFS…YCIY).

Its subcellular location is the membrane. This is an uncharacterized protein from Saccharomyces cerevisiae (strain ATCC 204508 / S288c) (Baker's yeast).